The primary structure comprises 104 residues: UPF0145 protein HCH_01985 (104 aa).

This sequence belongs to the UPF0145 family.

The sequence is that of UPF0145 protein HCH_01985 from Hahella chejuensis (strain KCTC 2396).